Consider the following 439-residue polypeptide: Agnestins biosynthesis cluster transcriptional coactivator AgnL9 (439 aa).

Residues 79–149 (MTIQTQLLAC…EPGHITHSAL (71 aa)) enclose the HTH iclR-type domain. The H-T-H motif DNA-binding region spans 109–128 (MKDVSELIDVPENQLGRIVR).

It is found in the nucleus. Transcriptional coactivator; part of the gene cluster that mediates the biosynthesis of agnestins, dihydroxy-xanthone metabolites. The polypeptide is Agnestins biosynthesis cluster transcriptional coactivator AgnL9 (Paecilomyces divaricatus (Penicillium divaricatum)).